The chain runs to 62 residues: Cecropin-A (62 aa).

The N-terminal stretch at 1–20 is a signal peptide; sequence MNLVKILFCVFACLVFTVTA. The propeptide at 21-24 is removed by a dipeptidylpeptidase; that stretch reads VPEP. At Thr-60 the chain carries Threonine amide.

Belongs to the cecropin family.

The protein resides in the secreted. In terms of biological role, has antibacterial activity. This Trichoplusia ni (Cabbage looper) protein is Cecropin-A.